The sequence spans 230 residues: Fibrillarin-like rRNA/tRNA 2'-O-methyltransferase (230 aa).

S-adenosyl-L-methionine is bound by residues 87–88 (TT), 105–106 (EY), 130–131 (DA), and 150–153 (DVAQ).

As to quaternary structure, interacts with nop5. Component of box C/D small ribonucleoprotein (sRNP) particles that contain rpl7ae, FlpA and nop5, plus a guide RNA.

Involved in pre-rRNA and tRNA processing. Utilizes the methyl donor S-adenosyl-L-methionine to catalyze the site-specific 2'-hydroxyl methylation of ribose moieties in rRNA and tRNA. Site specificity is provided by a guide RNA that base pairs with the substrate. Methylation occurs at a characteristic distance from the sequence involved in base pairing with the guide RNA. This Methanocaldococcus jannaschii (strain ATCC 43067 / DSM 2661 / JAL-1 / JCM 10045 / NBRC 100440) (Methanococcus jannaschii) protein is Fibrillarin-like rRNA/tRNA 2'-O-methyltransferase.